We begin with the raw amino-acid sequence, 326 residues long: Beta-ketoacyl-[acyl-carrier-protein] synthase III (326 aa).

Active-site residues include cysteine 111 and histidine 252. The interval 253–257 (QANIR) is ACP-binding. The active site involves asparagine 282.

Belongs to the thiolase-like superfamily. FabH family. In terms of assembly, homodimer.

Its subcellular location is the plastid. The protein localises to the chloroplast. The enzyme catalyses malonyl-[ACP] + acetyl-CoA + H(+) = 3-oxobutanoyl-[ACP] + CO2 + CoA. The protein operates within lipid metabolism; fatty acid biosynthesis. Its function is as follows. Catalyzes the condensation reaction of fatty acid synthesis by the addition to an acyl acceptor of two carbons from malonyl-ACP. Catalyzes the first condensation reaction which initiates fatty acid synthesis and may therefore play a role in governing the total rate of fatty acid production. Possesses both acetoacetyl-ACP synthase and acetyl transacylase activities. Its substrate specificity determines the biosynthesis of branched-chain and/or straight-chain of fatty acids. This is Beta-ketoacyl-[acyl-carrier-protein] synthase III from Porphyra umbilicalis (Purple laver).